A 207-amino-acid polypeptide reads, in one-letter code: 2,3-bisphosphoglycerate-dependent phosphoglycerate mutase (207 aa).

Residues 10-17 (RHGQSEWN), 23-24 (TG), Arg-62, 89-92 (ERDY), Lys-100, 116-117 (RR), and 160-161 (GN) each bind substrate. His-11 acts as the Tele-phosphohistidine intermediate in catalysis. The active-site Proton donor/acceptor is Glu-89.

The protein belongs to the phosphoglycerate mutase family. BPG-dependent PGAM subfamily. In terms of assembly, homodimer.

It carries out the reaction (2R)-2-phosphoglycerate = (2R)-3-phosphoglycerate. It functions in the pathway carbohydrate degradation; glycolysis; pyruvate from D-glyceraldehyde 3-phosphate: step 3/5. In terms of biological role, catalyzes the interconversion of 2-phosphoglycerate and 3-phosphoglycerate. This Bradyrhizobium diazoefficiens (strain JCM 10833 / BCRC 13528 / IAM 13628 / NBRC 14792 / USDA 110) protein is 2,3-bisphosphoglycerate-dependent phosphoglycerate mutase.